A 282-amino-acid chain; its full sequence is Flagellin (282 aa).

It belongs to the bacterial flagellin family.

The protein localises to the secreted. Its subcellular location is the bacterial flagellum. Flagellin is the subunit protein which polymerizes to form the filaments of bacterial flagella. The flagellum is required to cause a persistent disease in a murine model of infection. The protein is Flagellin (fliC) of Brucella melitensis biotype 1 (strain ATCC 23456 / CCUG 17765 / NCTC 10094 / 16M).